The primary structure comprises 409 residues: MVQYLLITANVGSLFEPDARLHTSWIKTVADQVESVDPSFFVIHLQETGGKKFTECSQQVPIIINRLSTALPKFDLLRAYVDIDYEAIEYTALGALCFIKRSLWSNVSQFNFHTKKYEQLTSPKEVVTHGLENYPYVVKHKFPKDFWPSIKWGRKGYMQTRWKIENKVFDFVNAHLFHDESNLALIHENPQLYSQNRKRALDFVLAELSSKENGCTPLLFVFGDLNFRLDSRSFLNRLTERTAQHPVADQEQMGSLADGLQASAANLQVITHPSENLRRTVSAIEFRRESDSDDSQNSCVLRIEKKKFDYFNHKKLLDDWRSYRDDDKETENFQSMFEMHINFPPTYPWSEDPENSETLMKTRAPAWCDRVLMNKNAYSLVEEGEPQYRSFGMETCTGDHKPVMLTFNI.

The protein belongs to the inositol 1,4,5-trisphosphate 5-phosphatase type I family.

It carries out the reaction 1D-myo-inositol 1,4,5-trisphosphate + H2O = 1D-myo-inositol 1,4-bisphosphate + phosphate. It catalyses the reaction 1D-myo-inositol 1,3,4,5-tetrakisphosphate + H2O = 1D-myo-inositol 1,3,4-trisphosphate + phosphate. The chain is Probable type I inositol 1,4,5-trisphosphate 5-phosphatase (ipp-5) from Caenorhabditis elegans.